The primary structure comprises 141 residues: Large ribosomal subunit protein uL11 (141 aa).

This sequence belongs to the universal ribosomal protein uL11 family. Part of the ribosomal stalk of the 50S ribosomal subunit. Interacts with L10 and the large rRNA to form the base of the stalk. L10 forms an elongated spine to which L12 dimers bind in a sequential fashion forming a multimeric L10(L12)X complex. One or more lysine residues are methylated.

Functionally, forms part of the ribosomal stalk which helps the ribosome interact with GTP-bound translation factors. In Streptococcus uberis (strain ATCC BAA-854 / 0140J), this protein is Large ribosomal subunit protein uL11.